The following is a 140-amino-acid chain: UPF0225 protein SAV_6631 (140 aa).

Residues 1 to 22 (MSKSRRTRSTSRPTSRPQPASC) form a disordered region. Low complexity predominate over residues 10 to 19 (TSRPTSRPQP).

It belongs to the UPF0225 family.

The protein is UPF0225 protein SAV_6631 of Streptomyces avermitilis (strain ATCC 31267 / DSM 46492 / JCM 5070 / NBRC 14893 / NCIMB 12804 / NRRL 8165 / MA-4680).